Consider the following 226-residue polypeptide: Glutathione S-transferase-like protein gedE (226 aa).

Residues 4–85 (LLPIKVWGQG…YLVERYDTAH (82 aa)) enclose the GST N-terminal domain. The region spanning 92-226 (DTNDAQHARQ…VLSAVMPPPS (135 aa)) is the GST C-terminal domain.

Belongs to the GST superfamily.

The protein operates within secondary metabolite biosynthesis. Its function is as follows. Glutathione S-transferase-like protein; part of the gene cluster that mediates the biosynthesis of geodin, an intermediate in the biosynthesis of other natural products. The pathway begins with the synthesis of atrochrysone thioester by the polyketide synthase (PKS) gedC. The atrochrysone carboxyl ACP thioesterase gedB then breaks the thioester bond and releases the atrochrysone carboxylic acid from gedC. The atrochrysone carboxylic acid is then converted to atrochrysone which is further transformed into emodinanthrone. The next step is performed by the emodinanthrone oxygenase gedH that catalyzes the oxidation of emodinanthrone to emodin. Emodin O-methyltransferase encoded probably by gedA then catalyzes methylation of the 8-hydroxy group of emodin to form questin. Ring cleavage of questin by questin oxidase gedK leads to desmethylsulochrin via several intermediates including questin epoxide. Another methylation step probably catalyzed by methyltransferase gedG leads to the formation of sulochrin which is further converted to dihydrogeodin by the sulochrin halogenase gedL. Finally, the dihydrogeodin oxidase gedJ catalyzes the stereospecific phenol oxidative coupling reaction converting dihydrogeodin to geodin. The sequence is that of Glutathione S-transferase-like protein gedE from Aspergillus terreus (strain NIH 2624 / FGSC A1156).